The following is a 335-amino-acid chain: Tetraacyldisaccharide 4'-kinase (335 aa).

59 to 66 (TAGGNGKT) contributes to the ATP binding site.

This sequence belongs to the LpxK family.

It carries out the reaction a lipid A disaccharide + ATP = a lipid IVA + ADP + H(+). Its pathway is glycolipid biosynthesis; lipid IV(A) biosynthesis; lipid IV(A) from (3R)-3-hydroxytetradecanoyl-[acyl-carrier-protein] and UDP-N-acetyl-alpha-D-glucosamine: step 6/6. Its function is as follows. Transfers the gamma-phosphate of ATP to the 4'-position of a tetraacyldisaccharide 1-phosphate intermediate (termed DS-1-P) to form tetraacyldisaccharide 1,4'-bis-phosphate (lipid IVA). The protein is Tetraacyldisaccharide 4'-kinase of Aliivibrio salmonicida (strain LFI1238) (Vibrio salmonicida (strain LFI1238)).